The following is a 208-amino-acid chain: Guanylate kinase (208 aa).

One can recognise a Guanylate kinase-like domain in the interval glycine 3–valine 181. Alanine 10–threonine 17 serves as a coordination point for ATP.

The protein belongs to the guanylate kinase family.

Its subcellular location is the cytoplasm. It catalyses the reaction GMP + ATP = GDP + ADP. Its function is as follows. Essential for recycling GMP and indirectly, cGMP. In Psychrobacter arcticus (strain DSM 17307 / VKM B-2377 / 273-4), this protein is Guanylate kinase.